The following is a 337-amino-acid chain: Nicotinate-nucleotide--dimethylbenzimidazole phosphoribosyltransferase (337 aa).

Glu-305 (proton acceptor) is an active-site residue.

It belongs to the CobT family.

The catalysed reaction is 5,6-dimethylbenzimidazole + nicotinate beta-D-ribonucleotide = alpha-ribazole 5'-phosphate + nicotinate + H(+). It participates in nucleoside biosynthesis; alpha-ribazole biosynthesis; alpha-ribazole from 5,6-dimethylbenzimidazole: step 1/2. Catalyzes the synthesis of alpha-ribazole-5'-phosphate from nicotinate mononucleotide (NAMN) and 5,6-dimethylbenzimidazole (DMB). The chain is Nicotinate-nucleotide--dimethylbenzimidazole phosphoribosyltransferase from Jannaschia sp. (strain CCS1).